The chain runs to 456 residues: Bifunctional protein GlmU (456 aa).

The pyrophosphorylase stretch occupies residues 1 to 229 (MLNSAMSVVI…ISETDGVNNR (229 aa)). UDP-N-acetyl-alpha-D-glucosamine contacts are provided by residues 11 to 14 (LAAG), Lys25, Gln76, 81 to 82 (GT), 103 to 105 (YGD), Gly140, Glu154, Asn169, and Asn227. Asp105 lines the Mg(2+) pocket. Position 227 (Asn227) interacts with Mg(2+). The segment at 230–250 (LQLSRLERIYQAEQAEKLLLS) is linker. The interval 251-456 (GVMLRDPARF…QGWQRPVKKK (206 aa)) is N-acetyltransferase. Residues Arg333 and Lys351 each coordinate UDP-N-acetyl-alpha-D-glucosamine. The active-site Proton acceptor is His363. UDP-N-acetyl-alpha-D-glucosamine contacts are provided by Tyr366 and Asn377. Acetyl-CoA contacts are provided by residues Ala380, 386-387 (NY), Ser405, Ala423, and Arg440.

It in the N-terminal section; belongs to the N-acetylglucosamine-1-phosphate uridyltransferase family. This sequence in the C-terminal section; belongs to the transferase hexapeptide repeat family. In terms of assembly, homotrimer. It depends on Mg(2+) as a cofactor.

The protein localises to the cytoplasm. The catalysed reaction is alpha-D-glucosamine 1-phosphate + acetyl-CoA = N-acetyl-alpha-D-glucosamine 1-phosphate + CoA + H(+). The enzyme catalyses N-acetyl-alpha-D-glucosamine 1-phosphate + UTP + H(+) = UDP-N-acetyl-alpha-D-glucosamine + diphosphate. Its pathway is nucleotide-sugar biosynthesis; UDP-N-acetyl-alpha-D-glucosamine biosynthesis; N-acetyl-alpha-D-glucosamine 1-phosphate from alpha-D-glucosamine 6-phosphate (route II): step 2/2. It participates in nucleotide-sugar biosynthesis; UDP-N-acetyl-alpha-D-glucosamine biosynthesis; UDP-N-acetyl-alpha-D-glucosamine from N-acetyl-alpha-D-glucosamine 1-phosphate: step 1/1. It functions in the pathway bacterial outer membrane biogenesis; LPS lipid A biosynthesis. Functionally, catalyzes the last two sequential reactions in the de novo biosynthetic pathway for UDP-N-acetylglucosamine (UDP-GlcNAc). The C-terminal domain catalyzes the transfer of acetyl group from acetyl coenzyme A to glucosamine-1-phosphate (GlcN-1-P) to produce N-acetylglucosamine-1-phosphate (GlcNAc-1-P), which is converted into UDP-GlcNAc by the transfer of uridine 5-monophosphate (from uridine 5-triphosphate), a reaction catalyzed by the N-terminal domain. This chain is Bifunctional protein GlmU, found in Salmonella paratyphi A (strain ATCC 9150 / SARB42).